We begin with the raw amino-acid sequence, 543 residues long: CBS domain-containing protein CBSCBSPB1 (543 aa).

The segment at 1-35 (MASQGGPRRSLSVTTASLHGKKKSMDMAERGLDTG) is disordered. Position 17 is a phosphoserine (S17). Basic and acidic residues predominate over residues 23–35 (KSMDMAERGLDTG). CBS domains are found at residues 59–118 (RLSK…NVEE), 125–183 (MTKN…RAAE), 225–285 (IIPD…LPPS), and 293–350 (MTQN…AGTT). Residues 372–393 (LSPNEDDEDSRSESSMKVASEA) are disordered. The 88-residue stretch at 402–489 (ANTFSFKIED…KSLRLHLDDS (88 aa)) folds into the PB1 domain. The chain crosses the membrane as a helical span at residues 518-538 (AYSGVAAGAALVAGLGFMAFL).

It is found in the membrane. The polypeptide is CBS domain-containing protein CBSCBSPB1 (CBSCBSPB1) (Arabidopsis thaliana (Mouse-ear cress)).